The primary structure comprises 427 residues: MEAKVEKIETNVVKLEIKVEAEKFDAALTKAYNKNKGKYNVPGFRKGKVPMAILKKMYGIEIFYDDAVNIAIDESYNEALKAEDIRPVDYPKVDIVEIGEGKELVYTATVTTYPEVEIGEYKGLDIKKPSYEVSEEEVEKQVKEMQSKNARVETKEEGTIADGNIAIIDFKGFVDGEAFEGGEGTDYPLEIGSGTFIDNFEEQLVGLAIGDKKEVNVTFPENYGKEELNAKPAMFEVTVKGIKVKELPELDDEFAKEVSEFDTLAELKENVKKRLEESNNERAEREFEEAVITSIIETSKIDLPEVMLTKEIDSMMKDLESRLQYQGLSLDQYMEFTGNTIEKMREFMKENAERKVKADIILEAVAKAEEVKATDEQLNERALELGRMYGPKDPKKMANILLKAQKAMIEKDIIIENTLKLIKESCK.

The PPIase FKBP-type domain maps to 163 to 248 (GNIAIIDFKG…VKGIKVKELP (86 aa)).

The protein belongs to the FKBP-type PPIase family. Tig subfamily.

The protein localises to the cytoplasm. The catalysed reaction is [protein]-peptidylproline (omega=180) = [protein]-peptidylproline (omega=0). Functionally, involved in protein export. Acts as a chaperone by maintaining the newly synthesized protein in an open conformation. Functions as a peptidyl-prolyl cis-trans isomerase. The chain is Trigger factor from Clostridium botulinum (strain Alaska E43 / Type E3).